A 387-amino-acid chain; its full sequence is Chaperone protein DnaJ (387 aa).

Residues 5-70 (DYYEVLGLQK…DKKAKYDQFG (66 aa)) form the J domain. Residues 144–226 (GCEKEISITR…CKGKGTVRKN (83 aa)) form a CR-type zinc finger. Residues cysteine 157, cysteine 160, cysteine 174, cysteine 177, cysteine 200, cysteine 203, cysteine 214, and cysteine 217 each contribute to the Zn(2+) site. CXXCXGXG motif repeat units follow at residues 157–164 (CETCHGTG), 174–181 (CPKCNGSG), 200–207 (CDQCGGTG), and 214–221 (CPDCKGKG).

It belongs to the DnaJ family. As to quaternary structure, homodimer. Requires Zn(2+) as cofactor.

It localises to the cytoplasm. Functionally, participates actively in the response to hyperosmotic and heat shock by preventing the aggregation of stress-denatured proteins and by disaggregating proteins, also in an autonomous, DnaK-independent fashion. Unfolded proteins bind initially to DnaJ; upon interaction with the DnaJ-bound protein, DnaK hydrolyzes its bound ATP, resulting in the formation of a stable complex. GrpE releases ADP from DnaK; ATP binding to DnaK triggers the release of the substrate protein, thus completing the reaction cycle. Several rounds of ATP-dependent interactions between DnaJ, DnaK and GrpE are required for fully efficient folding. Also involved, together with DnaK and GrpE, in the DNA replication of plasmids through activation of initiation proteins. The sequence is that of Chaperone protein DnaJ from Clostridium perfringens (strain 13 / Type A).